We begin with the raw amino-acid sequence, 340 residues long: Dihydroorotate dehydrogenase (quinone) (340 aa).

Residues 65–69 and T89 each bind FMN; that span reads AGADK. K69 lines the substrate pocket. 114 to 118 contributes to the substrate binding site; it reads NRNGF. Positions 142 and 175 each coordinate FMN. N175 is a substrate binding site. The Nucleophile role is filled by S178. N180 contacts substrate. FMN contacts are provided by K220 and T248. Position 249 to 250 (249 to 250) interacts with substrate; it reads NT. Residues G271, G300, and 321–322 contribute to the FMN site; that span reads YS.

The protein belongs to the dihydroorotate dehydrogenase family. Type 2 subfamily. In terms of assembly, monomer. The cofactor is FMN.

It localises to the cell membrane. The catalysed reaction is (S)-dihydroorotate + a quinone = orotate + a quinol. It participates in pyrimidine metabolism; UMP biosynthesis via de novo pathway; orotate from (S)-dihydroorotate (quinone route): step 1/1. Functionally, catalyzes the conversion of dihydroorotate to orotate with quinone as electron acceptor. The chain is Dihydroorotate dehydrogenase (quinone) from Mannheimia succiniciproducens (strain KCTC 0769BP / MBEL55E).